The sequence spans 237 residues: Phosphoribosylaminoimidazole-succinocarboxamide synthase (237 aa).

It belongs to the SAICAR synthetase family.

The catalysed reaction is 5-amino-1-(5-phospho-D-ribosyl)imidazole-4-carboxylate + L-aspartate + ATP = (2S)-2-[5-amino-1-(5-phospho-beta-D-ribosyl)imidazole-4-carboxamido]succinate + ADP + phosphate + 2 H(+). It participates in purine metabolism; IMP biosynthesis via de novo pathway; 5-amino-1-(5-phospho-D-ribosyl)imidazole-4-carboxamide from 5-amino-1-(5-phospho-D-ribosyl)imidazole-4-carboxylate: step 1/2. The polypeptide is Phosphoribosylaminoimidazole-succinocarboxamide synthase (Sodalis glossinidius (strain morsitans)).